The following is a 242-amino-acid chain: NAD-dependent protein deacetylase (242 aa).

The region spanning 1-242 (MQQFEEVHSI…EFVEGLSSRK (242 aa)) is the Deacetylase sirtuin-type domain. NAD(+) is bound by residues Ala-23, Thr-27, Phe-34, Arg-35, Gln-102, Ile-104, Asp-105, and His-120. Phe-34 contributes to the nicotinamide binding site. The nicotinamide site is built by Ile-104 and Asp-105. His-120 serves as the catalytic Proton acceptor. Residues Cys-128, Cys-131, Cys-148, and Cys-151 each contribute to the Zn(2+) site. Residues Thr-187, Ser-188, Asn-213, and Ile-231 each contribute to the NAD(+) site.

It belongs to the sirtuin family. Class U subfamily. Zn(2+) serves as cofactor.

It localises to the cytoplasm. The catalysed reaction is N(6)-acetyl-L-lysyl-[protein] + NAD(+) + H2O = 2''-O-acetyl-ADP-D-ribose + nicotinamide + L-lysyl-[protein]. Its function is as follows. NAD-dependent protein deacetylase which modulates the activities of several enzymes which are inactive in their acetylated form. This Bacillus cereus (strain ATCC 10987 / NRS 248) protein is NAD-dependent protein deacetylase.